The sequence spans 679 residues: Glycine--tRNA ligase beta subunit (679 aa).

It belongs to the class-II aminoacyl-tRNA synthetase family. Tetramer of two alpha and two beta subunits.

The protein localises to the cytoplasm. The catalysed reaction is tRNA(Gly) + glycine + ATP = glycyl-tRNA(Gly) + AMP + diphosphate. This chain is Glycine--tRNA ligase beta subunit, found in Streptococcus pyogenes serotype M2 (strain MGAS10270).